The primary structure comprises 87 residues: Putative defensin-like protein 238 (87 aa).

Residues 1-23 (MRSITWFIVFCVFMFIALNHVKG) form the signal peptide. Disulfide bonds link Cys-30/Cys-87, Cys-40/Cys-65, Cys-48/Cys-78, and Cys-63/Cys-80.

It belongs to the DEFL family.

It is found in the secreted. This chain is Putative defensin-like protein 238 (SCRL16), found in Arabidopsis thaliana (Mouse-ear cress).